The primary structure comprises 305 residues: MKKWFIALAGLLLTVTLAGCGSQTVATTNGGKITESAYYSSLKGTSSGKQVLQQMILNKVLEKQYGDKVSKSAVTKQFDKYKSQYGSSFSSVLSQSGMTQSSLKTEIRSNLLLKEAVKDNVTVTDAQLKKQFKSYEPEVSVAHILVSKKSTAQTIIKDLKSTKSSDMTSEFTKLAKKYSTDTATKNKGGKLSSFDSTDTSLDSTFKKAAFKLKTGEYTATPVKTQYGYHVILMLKNPGKGTIKEHKAELTKQIIDNDMNDSTVLHNVVAKVLKKGNVSIKDNDLKNILSDYLSSSSSSSASSSSK.

The signal sequence occupies residues 1–19 (MKKWFIALAGLLLTVTLAG). The N-palmitoyl cysteine moiety is linked to residue Cys20. Residue Cys20 is the site of S-diacylglycerol cysteine attachment. One can recognise a PpiC domain in the interval 136-235 (EPEVSVAHIL…YGYHVILMLK (100 aa)).

This sequence belongs to the PrsA family.

The protein localises to the cell membrane. It carries out the reaction [protein]-peptidylproline (omega=180) = [protein]-peptidylproline (omega=0). Its function is as follows. Plays a major role in protein secretion by helping the post-translocational extracellular folding of several secreted proteins. This is Foldase protein PrsA from Levilactobacillus brevis (strain ATCC 367 / BCRC 12310 / CIP 105137 / JCM 1170 / LMG 11437 / NCIMB 947 / NCTC 947) (Lactobacillus brevis).